Reading from the N-terminus, the 271-residue chain is Mannosyl-3-phosphoglycerate phosphatase (271 aa).

The active-site Nucleophile is Asp-13. The Mg(2+) site is built by Asp-13, Asp-15, and Asp-214.

It belongs to the HAD-like hydrolase superfamily. MPGP family. The cofactor is Mg(2+).

It is found in the cytoplasm. The enzyme catalyses 2-O-(alpha-D-mannosyl)-3-phosphoglycerate + H2O = (2R)-2-O-(alpha-D-mannosyl)-glycerate + phosphate. This chain is Mannosyl-3-phosphoglycerate phosphatase, found in Escherichia coli (strain SE11).